The following is a 109-amino-acid chain: Membrane-bound lysozyme inhibitor of C-type lysozyme (109 aa).

The first 17 residues, 1 to 17 (MTMKKLLIIILPVLLSG), serve as a signal peptide directing secretion. C18 carries the N-palmitoyl cysteine lipid modification. C18 is lipidated: S-diacylglycerol cysteine. Cysteines 37 and 102 form a disulfide.

This sequence belongs to the MliC family. Type 1 subfamily. As to quaternary structure, monomer.

It is found in the cell outer membrane. In terms of biological role, specifically inhibits C-type lysozymes. The protein is Membrane-bound lysozyme inhibitor of C-type lysozyme of Escherichia coli (strain K12).